A 100-amino-acid chain; its full sequence is Integration host factor subunit alpha (100 aa).

Residues 53–73 form a disordered region; it reads FDLRDKRQRPGRNPKTGEEIP.

It belongs to the bacterial histone-like protein family. As to quaternary structure, heterodimer of an alpha and a beta chain.

In terms of biological role, this protein is one of the two subunits of integration host factor, a specific DNA-binding protein that functions in genetic recombination as well as in transcriptional and translational control. This Pseudomonas aeruginosa (strain LESB58) protein is Integration host factor subunit alpha.